The sequence spans 501 residues: Alveolysin (501 aa).

Residues 1–32 (MKKKSNHLKGRKVLVSLLVSLQVFAFASISSA) form the signal peptide. 4 beta stranded membrane passes run 191-204 (QNQI…NAKV), 211-220 (IDFNAVANGE), 289-298 (SNDVQTAFKL), and 306-318 (QASG…YENS). The short motif at 460-470 (ECTGLAWEWWR) is the Conserved undecapeptide element. The Cholesterol binding motif lies at 492 to 493 (TL).

The protein belongs to the cholesterol-dependent cytolysin family. As to quaternary structure, homooligomeric pore complex of 35 to 50 subunits; when inserted in the host membrane.

The protein resides in the secreted. The protein localises to the host cell membrane. Inhibited by cholesterol and thiol reagents. Its function is as follows. A cholesterol-dependent toxin that causes cytolysis by forming pores in cholesterol containing host membranes. After binding to target membranes, the protein undergoes a major conformation change, leading to its insertion in the host membrane and formation of an oligomeric pore complex. Cholesterol is required for binding to host cell membranes, membrane insertion and pore formation; cholesterol binding is mediated by a Thr-Leu pair in the C-terminus. Can be reversibly inactivated by oxidation. The protein is Alveolysin (alv) of Paenibacillus alvei (Bacillus alvei).